A 462-amino-acid chain; its full sequence is uncharacterized protein (462 aa).

The disordered stretch occupies residues 405–462 (QPIGNNKSSPMKREFTAMEEDKTETGDIFKLLSQQKPAKGAKSKSKKYKKTEEDLSAV). Positions 415–431 (MKREFTAMEEDKTETGD) are enriched in basic and acidic residues. Over residues 443–453 (KGAKSKSKKYK) the composition is skewed to basic residues.

This is an uncharacterized protein from Magallana gigas (Pacific oyster).